Here is a 265-residue protein sequence, read N- to C-terminus: uncharacterized protein (265 aa).

2 disordered regions span residues 21–53 and 78–133; these read TLTHDEQGPGVEPGPCSRGSSIDGLLPSLLGPH and HAPS…SSVS. Acidic residues predominate over residues 90 to 101; sequence DDDDDDEDDDDS. Residues 114–123 show a composition bias toward low complexity; sequence SSSSSSSPRV. Position 137–144 (137–144) interacts with ATP; the sequence is AILHQGKS.

This is an uncharacterized protein from Saccharomyces cerevisiae (strain ATCC 204508 / S288c) (Baker's yeast).